The primary structure comprises 100 residues: MVPFEYYVALSGLLMVLGFIGVIIRKNIIAMLLSTELMLNAVNIAFVAFDMKLHDVVGQVFVFFILTIAAAEAAIGLGLIIAIYRMKKDVDVEKLTELKG.

The next 3 membrane-spanning stretches (helical) occupy residues 4 to 24, 28 to 48, and 61 to 81; these read FEYY…GVII, IIAM…AFVA, and FVFF…GLII.

This sequence belongs to the complex I subunit 4L family. In terms of assembly, NDH-1 is composed of 14 different subunits. Subunits NuoA, H, J, K, L, M, N constitute the membrane sector of the complex.

Its subcellular location is the cell inner membrane. The catalysed reaction is a quinone + NADH + 5 H(+)(in) = a quinol + NAD(+) + 4 H(+)(out). In terms of biological role, NDH-1 shuttles electrons from NADH, via FMN and iron-sulfur (Fe-S) centers, to quinones in the respiratory chain. The immediate electron acceptor for the enzyme in this species is believed to be ubiquinone. Couples the redox reaction to proton translocation (for every two electrons transferred, four hydrogen ions are translocated across the cytoplasmic membrane), and thus conserves the redox energy in a proton gradient. This chain is NADH-quinone oxidoreductase subunit K, found in Sulfurihydrogenibium sp. (strain YO3AOP1).